The chain runs to 229 residues: PKHD-type hydroxylase RPA3479 (229 aa).

A Fe2OG dioxygenase domain is found at Q78–S180. Fe cation-binding residues include H98, D100, and H161. A 2-oxoglutarate-binding site is contributed by R171.

Fe(2+) serves as cofactor. The cofactor is L-ascorbate.

In Rhodopseudomonas palustris (strain ATCC BAA-98 / CGA009), this protein is PKHD-type hydroxylase RPA3479.